Consider the following 842-residue polypeptide: Synaptonemal complex protein 2-like (842 aa).

Disordered stretches follow at residues 451-473 (GSLEITNTEERSLENSKQDEPEQ), 505-560 (FARD…KQRV), 619-666 (STQK…SSLE), and 715-738 (EDAPGSPVVTDTSTPSQEDMPGSV). Composition is skewed to basic and acidic residues over residues 458-470 (TEERSLENSKQDE) and 505-525 (FARDREQDRRMPFNDRNHDLL). Basic residues predominate over residues 543–559 (NHKRKSLRTYSQRKKQR). Basic and acidic residues-rich tracts occupy residues 624 to 633 (GLEKPERRGS) and 643 to 655 (RVTDGLHWREPRS).

This sequence belongs to the SYCP2 family. Specifically expressed in oocytes.

It is found in the nucleus. It localises to the chromosome. The protein resides in the centromere. Its function is as follows. Oocyte-specific protein that localizes to centromeres at the dictyate stage and regulates the survival of primordial oocytes. The protein is Synaptonemal complex protein 2-like of Mus musculus (Mouse).